The following is a 159-amino-acid chain: NADH-quinone oxidoreductase subunit B (159 aa).

Cys37, Cys38, Cys102, and Cys132 together coordinate [4Fe-4S] cluster.

This sequence belongs to the complex I 20 kDa subunit family. NDH-1 is composed of 14 different subunits. Subunits NuoB, C, D, E, F, and G constitute the peripheral sector of the complex. It depends on [4Fe-4S] cluster as a cofactor.

It localises to the cell inner membrane. It carries out the reaction a quinone + NADH + 5 H(+)(in) = a quinol + NAD(+) + 4 H(+)(out). NDH-1 shuttles electrons from NADH, via FMN and iron-sulfur (Fe-S) centers, to quinones in the respiratory chain. The immediate electron acceptor for the enzyme in this species is believed to be ubiquinone. Couples the redox reaction to proton translocation (for every two electrons transferred, four hydrogen ions are translocated across the cytoplasmic membrane), and thus conserves the redox energy in a proton gradient. This Variovorax paradoxus (strain S110) protein is NADH-quinone oxidoreductase subunit B.